The primary structure comprises 1153 residues: Tyrosine-protein kinase JAK1 (1153 aa).

The region spanning 32–416 (KGLEIHFYLA…GYFRLTVDAH (385 aa)) is the FERM domain. Residues 435 to 540 (GCHGPICTEY…NLRFQLRRCC (106 aa)) form the SH2; atypical domain. Protein kinase domains follow at residues 580–846 (IVQG…DIVM) and 872–1150 (LKKI…QQML). ATP-binding positions include 878–886 (LGEGHFGKV) and lysine 905. Aspartate 1000 (proton acceptor) is an active-site residue. Residues tyrosine 1031 and tyrosine 1032 each carry the phosphotyrosine; by autocatalysis modification.

It belongs to the protein kinase superfamily. Tyr protein kinase family. JAK subfamily. Requires Mg(2+) as cofactor.

Its subcellular location is the endomembrane system. The catalysed reaction is L-tyrosyl-[protein] + ATP = O-phospho-L-tyrosyl-[protein] + ADP + H(+). Its function is as follows. Tyrosine kinase of the non-receptor type, involved in the IFN-alpha/beta/gamma signal pathway. Appears to be required in early development for specific cell migrations (epiboly), expression of homeobox protein goosecoid and formation of anterior structures. The chain is Tyrosine-protein kinase JAK1 (jak1) from Danio rerio (Zebrafish).